The following is a 242-amino-acid chain: Endoglucanase (242 aa).

The N-terminal stretch at 1-21 (MQVIVLPLVFLATFATSGSLA) is a signal peptide. The active-site Nucleophile is Asp47. Residues Asn79, Asn103, and Asn217 are each glycosylated (N-linked (GlcNAc...) asparagine).

Belongs to the glycosyl hydrolase 45 (cellulase K) family. Expressed in larval carcasses and gut, and adult gut.

Its subcellular location is the secreted. The enzyme catalyses Endohydrolysis of (1-&gt;4)-beta-D-glucosidic linkages in cellulose, lichenin and cereal beta-D-glucans.. This chain is Endoglucanase, found in Phaedon cochleariae (Mustard beetle).